A 78-amino-acid polypeptide reads, in one-letter code: Large ribosomal subunit protein uL29 (78 aa).

This sequence belongs to the universal ribosomal protein uL29 family.

This is Large ribosomal subunit protein uL29 from Crocosphaera subtropica (strain ATCC 51142 / BH68) (Cyanothece sp. (strain ATCC 51142)).